Consider the following 782-residue polypeptide: Cadherin-5 (782 aa).

A signal peptide spans Met-1–Thr-22. A propeptide spanning residues Ala-23–Arg-44 is cleaved from the precursor. Cadherin domains follow at residues Asp-45–Phe-148, Thr-149–Phe-255, Thr-256–Phe-370, Lys-371–Pro-475, and Glu-476–Gln-592. Topologically, residues Asp-45–Gln-598 are extracellular. Positions 55 and 56 each coordinate Ca(2+). The N-linked (GlcNAc...) asparagine glycan is linked to Asn-58. 7 residues coordinate Ca(2+): Asp-106, Glu-108, Asp-140, Ile-141, Asn-142, Asp-143, and Asn-144. A glycan (N-linked (GlcNAc...) asparagine) is linked at Asn-154. Positions 174, 176, 183, and 228 each coordinate Ca(2+). 4 N-linked (GlcNAc...) asparagine glycosylation sites follow: Asn-360, Asn-440, Asn-522, and Asn-534. The helical transmembrane segment at Ala-599–Leu-619 threads the bilayer. The segment at Arg-620 to Val-659 is required for interaction with PALS1. The Cytoplasmic segment spans residues Arg-620–Tyr-782.

Part of a complex composed of AMOTL2, MAGI1 and CDH5, within the complex AMOTL2 acts as a scaffold protein for the interaction of MAGI1 with CDH5. The complex is required for coupling actin fibers to cell junctions in endothelial cells. Within the complex AMOTL2 (via its N-terminus) interacts with CDH5. Interacts (via cadherin 5 domain) with PTPRB. Interacts with TRPC4. Interacts with KRIT1. Interacts with PARD3. Interacts with RTN4 (isoform B). Interacts with PALS1; the interaction promotes PALS1 localization to cell junctions and is required for CDH5-mediated vascular lumen formation and endothelial cell. Interacts with CTNND1/p120-catenin; the interaction controls CADH5 endocytosis. Phosphorylated on tyrosine residues by KDR/VEGFR-2. Dephosphorylated by PTPRB. In terms of processing, O-glycosylated.

The protein resides in the cell junction. Its subcellular location is the adherens junction. It is found in the cell membrane. The protein localises to the cytoplasm. Cadherins are calcium-dependent cell adhesion proteins. They preferentially interact with themselves in a homophilic manner in connecting cells; cadherins may thus contribute to the sorting of heterogeneous cell types. This cadherin may play a important role in endothelial cell biology through control of the cohesion and organization of the intercellular junctions. It associates with alpha-catenin forming a link to the cytoskeleton. Plays a role in coupling actin fibers to cell junctions in endothelial cells, via acting as a cell junctional complex anchor for AMOTL2 and MAGI1. Acts in concert with KRIT1 and PALS1 to establish and maintain correct endothelial cell polarity and vascular lumen. These effects are mediated by recruitment and activation of the Par polarity complex and RAP1B. Required for activation of PRKCZ and for localization of phosphorylated PRKCZ, PARD3, TIAM1 and RAP1B to the cell junction. Associates with CTNND1/p120-catenin to control CADH5 endocytosis. This Sus scrofa (Pig) protein is Cadherin-5.